A 297-amino-acid chain; its full sequence is Homoserine kinase (297 aa).

ATP is bound at residue 82–92 (PLTRGLGSSAS).

Belongs to the GHMP kinase family. Homoserine kinase subfamily.

The protein localises to the cytoplasm. It catalyses the reaction L-homoserine + ATP = O-phospho-L-homoserine + ADP + H(+). It functions in the pathway amino-acid biosynthesis; L-threonine biosynthesis; L-threonine from L-aspartate: step 4/5. Catalyzes the ATP-dependent phosphorylation of L-homoserine to L-homoserine phosphate. This is Homoserine kinase from Bacillus cereus (strain B4264).